Consider the following 173-residue polypeptide: MNATHCILALQLCLLAISGCSSQVPIIEEIENLKRYFNSSNSAVGDSKDVVLHVLRNWQEDGDTKVIDVQIVSFYFKLFEALKGNQAIEKSINAIRADLIANFFNNSEAKYDGFMSIMKIEVNDPQIQSKAINELVKVMGHLSPRVTLRKRKRSRCCFGGGNRLNKNNPASTI.

An N-terminal signal peptide occupies residues 1–22; the sequence is MNATHCILALQLCLLAISGCSS. The residue at position 23 (Gln23) is a Pyrrolidone carboxylic acid. Residues Asn38 and Asn105 are each glycosylated (N-linked (GlcNAc...) asparagine).

This sequence belongs to the type II (or gamma) interferon family. In terms of assembly, homodimer. Interacts with IFNGR1 (via extracellular domain); this interaction promotes IFNGR1 dimerization. Released primarily from activated T lymphocytes.

It is found in the secreted. In terms of biological role, type II interferon produced by immune cells such as T-cells and NK cells that plays crucial roles in antimicrobial, antiviral, and antitumor responses by activating effector immune cells and enhancing antigen presentation. Primarily signals through the JAK-STAT pathway after interaction with its receptor IFNGR1 to affect gene regulation. Upon IFNG binding, IFNGR1 intracellular domain opens out to allow association of downstream signaling components JAK2, JAK1 and STAT1, leading to STAT1 activation, nuclear translocation and transcription of IFNG-regulated genes. Many of the induced genes are transcription factors such as IRF1 that are able to further drive regulation of a next wave of transcription. Plays a role in class I antigen presentation pathway by inducing a replacement of catalytic proteasome subunits with immunoproteasome subunits. In turn, increases the quantity, quality, and repertoire of peptides for class I MHC loading. Increases the efficiency of peptide generation also by inducing the expression of activator PA28 that associates with the proteasome and alters its proteolytic cleavage preference. Up-regulates as well MHC II complexes on the cell surface by promoting expression of several key molecules such as cathepsins B/CTSB, H/CTSH, and L/CTSL. Participates in the regulation of hematopoietic stem cells during development and under homeostatic conditions by affecting their development, quiescence, and differentiation. This Meriones unguiculatus (Mongolian jird) protein is Interferon gamma (IFNG).